The primary structure comprises 351 residues: Gene 58 protein (351 aa).

The next 11 helical transmembrane spans lie at 14 to 34 (FSTG…ATVF), 43 to 63 (QSVL…FCAV), 70 to 90 (LGLL…SWSL), 97 to 117 (LVPG…IVCF), 133 to 153 (LGFL…IYLT), 155 to 175 (VMFA…SHVW), 214 to 234 (LICL…LVMF), 240 to 260 (GVST…SLII), 268 to 288 (AVYS…GYLF), 293 to 313 (LSML…CLLY), and 328 to 348 (FILN…LLAQ).

The protein belongs to the herpesviridae BMRF2 family.

The protein localises to the host membrane. The polypeptide is Gene 58 protein (58) (Connochaetes taurinus (Blue wildebeest)).